We begin with the raw amino-acid sequence, 116 residues long: Iron-sulfur cluster insertion protein ErpA (116 aa).

Residues Cys44, Cys108, and Cys110 each coordinate iron-sulfur cluster.

This sequence belongs to the HesB/IscA family. In terms of assembly, homodimer. Requires iron-sulfur cluster as cofactor.

In terms of biological role, required for insertion of 4Fe-4S clusters for at least IspG. The polypeptide is Iron-sulfur cluster insertion protein ErpA (Shewanella amazonensis (strain ATCC BAA-1098 / SB2B)).